The chain runs to 222 residues: Small ribosomal subunit protein eS8z (222 aa).

2 disordered regions span residues Met-1–Lys-37 and Lys-125–Pro-147. Residues Ile-8–Lys-26 are compositionally biased toward basic residues.

It belongs to the eukaryotic ribosomal protein eS8 family.

This Arabidopsis thaliana (Mouse-ear cress) protein is Small ribosomal subunit protein eS8z (RPS8A).